Consider the following 267-residue polypeptide: Orotidine 5'-phosphate decarboxylase (267 aa).

Residues Asp37, 59-61 (KTH), 91-100 (DRKFADIGNT), Tyr217, and Arg235 each bind substrate. Lys93 functions as the Proton donor in the catalytic mechanism.

It belongs to the OMP decarboxylase family.

The enzyme catalyses orotidine 5'-phosphate + H(+) = UMP + CO2. Its pathway is pyrimidine metabolism; UMP biosynthesis via de novo pathway; UMP from orotate: step 2/2. The chain is Orotidine 5'-phosphate decarboxylase (URA3) from Kluyveromyces marxianus (Yeast).